Consider the following 138-residue polypeptide: Protein NrdI (138 aa).

It belongs to the NrdI family.

Probably involved in ribonucleotide reductase function. This chain is Protein NrdI, found in Paracoccus denitrificans (strain Pd 1222).